Here is a 345-residue protein sequence, read N- to C-terminus: OVARIAN TUMOR DOMAIN-containing deubiquitinating enzyme 9 (345 aa).

The OTU domain maps to 204 to 328 (LVENKIEGDG…EVHYNSIYPE (125 aa)). Residue Asp-212 is part of the active site. The Nucleophile role is filled by Cys-215. His-321 is an active-site residue.

The protein belongs to the peptidase C85 family.

It carries out the reaction Thiol-dependent hydrolysis of ester, thioester, amide, peptide and isopeptide bonds formed by the C-terminal Gly of ubiquitin (a 76-residue protein attached to proteins as an intracellular targeting signal).. Functionally, hydrolase that can remove conjugated ubiquitin from proteins in vitro and may therefore play an important regulatory role at the level of protein turnover by preventing degradation. Cysteine protease with a preference for 'Lys-63' and 'Lys-48' -linked ubiquitin (UB) tetramers as substrates. Also cleaves RUB-GST fusion. This chain is OVARIAN TUMOR DOMAIN-containing deubiquitinating enzyme 9, found in Arabidopsis thaliana (Mouse-ear cress).